We begin with the raw amino-acid sequence, 534 residues long: Prolyl 4-hydroxylase subunit alpha-1 (534 aa).

The N-terminal stretch at 1 to 17 (MIWYILIIGILLPQSLA) is a signal peptide. A glycan (N-linked (GlcNAc...) asparagine) is linked at N113. The stretch at 205-238 (VSVLDYLSYAVYQQGDLDKALLLTKKLLELDPEH) is one TPR repeat. N259 carries an N-linked (GlcNAc...) asparagine glycan. The Fe2OG dioxygenase domain occupies 411–519 (TAEELQVANY…KWVSNKWLHE (109 aa)). Fe cation contacts are provided by H429, D431, and H500. Residue K510 coordinates 2-oxoglutarate.

Belongs to the P4HA family. As to quaternary structure, heterotetramer of two alpha-1 chains and two beta chains (P4HB)(the beta chain is the multi-functional PDI), where P4HB plays the role of a structural subunit; this tetramer catalyzes the formation of 4-hydroxyproline in collagen. The cofactor is Fe(2+). Requires L-ascorbate as cofactor. As to expression, expressed in the heart, liver, skeletal muscle, kidney, placenta, lung and pancreas.

Its subcellular location is the endoplasmic reticulum lumen. It catalyses the reaction L-prolyl-[collagen] + 2-oxoglutarate + O2 = trans-4-hydroxy-L-prolyl-[collagen] + succinate + CO2. With respect to regulation, inhibited by poly(L-proline). Functionally, catalyzes the post-translational formation of 4-hydroxyproline in -Xaa-Pro-Gly- sequences in collagens and other proteins. The protein is Prolyl 4-hydroxylase subunit alpha-1 (P4HA1) of Homo sapiens (Human).